A 493-amino-acid chain; its full sequence is Cytoplasmic tRNA 2-thiolation protein 2 (493 aa).

Serine 489 carries the post-translational modification Phosphoserine.

It belongs to the CTU2/NCS2 family. Interacts with NCS6 and URM1. May act by forming a heterodimer with NCS6.

Its subcellular location is the cytoplasm. The protein operates within tRNA modification; 5-methoxycarbonylmethyl-2-thiouridine-tRNA biosynthesis. Plays a central role in 2-thiolation of mcm(5)S(2)U at tRNA wobble positions of tRNA(Lys), tRNA(Glu) and tRNA(Gln). May act by forming a heterodimer with NCS6 that ligates sulfur from thiocarboxylated URM1 onto the uridine of tRNAs at wobble position. Prior mcm(5) tRNA modification by the elongator complex is required for 2-thiolation. May also be involved in protein urmylation and in invasive and pseudohyphal growth. Inhibits replication of Brome mosaic virus. This chain is Cytoplasmic tRNA 2-thiolation protein 2, found in Saccharomyces cerevisiae (strain ATCC 204508 / S288c) (Baker's yeast).